The following is an 837-amino-acid chain: Tuftelin-interacting protein 11 (837 aa).

Basic and acidic residues-rich tracts occupy residues 1 to 13 (MSLSHLYRDGEGH) and 44 to 64 (QTKEEATYGVWAERDSDEERP). 3 disordered regions span residues 1-21 (MSLSHLYRDGEGHLDDDDDER), 34-73 (EFNPNRQRHWQTKEEATYGVWAERDSDEERPSFGGKRARD), and 85-135 (LKKG…FAGG). Positions 1–50 (MSLSHLYRDGEGHLDDDDDERENFEITDWDLQNEFNPNRQRHWQTKEEAT) are required for interaction with DHX15. Phosphoserine occurs at positions 2, 59, 95, and 98. Residues 91–100 (EEADSEDSDA) are compositionally biased toward acidic residues. The span at 101-116 (EEKPVKQEDFPKDLGP) shows a compositional bias: basic and acidic residues. Residue S144 is modified to Phosphoserine. The G-patch domain occupies 149 to 195 (TKGIGQKLLQKMGYVPGRGLGKNAQGIINPIEAKQRKGKGAVGAYGS). Residues 183-236 (QRKGKGAVGAYGSERTTQSLQDFPVADSEEEAEEEFQKELSQWRKDPSGSKKKP) are disordered. The residue at position 210 (S210) is a Phosphoserine. Positions 217-231 (EFQKELSQWRKDPSG) are enriched in basic and acidic residues. The short motif at 700–705 (VKDKFN) is the Nuclear localization signal element. The interval 710–734 (IMNRAVSSNVGAYMQPGARENIAYL) is required for nuclear speckle localization.

Belongs to the TFP11/STIP family. Identified in the spliceosome C complex. Found in the Intron Large (IL) complex, a post-mRNA release spliceosomal complex containing the excised intron, U2, U5 and U6 snRNPs, and splicing factors. Interacts with TUFT1. Interacts with DHX15; indicative for a recruitment of DHX15 to the IL complex. Interacts with GCFC2.

The protein localises to the cytoplasm. It localises to the nucleus. Its function is as follows. Involved in pre-mRNA splicing, specifically in spliceosome disassembly during late-stage splicing events. Intron turnover seems to proceed through reactions in two lariat-intron associated complexes termed Intron Large (IL) and Intron Small (IS). In cooperation with DHX15 seems to mediate the transition of the U2, U5 and U6 snRNP-containing IL complex to the snRNP-free IS complex leading to efficient debranching and turnover of excised introns. May play a role in the differentiation of ameloblasts and odontoblasts or in the forming of the enamel extracellular matrix. In Rattus norvegicus (Rat), this protein is Tuftelin-interacting protein 11 (Tfip11).